The chain runs to 256 residues: Pyridoxine 5'-phosphate synthase (256 aa).

3-amino-2-oxopropyl phosphate-binding residues include N8 and R19. H44 serves as the catalytic Proton acceptor. 1-deoxy-D-xylulose 5-phosphate-binding residues include R46 and H51. Catalysis depends on E74, which acts as the Proton acceptor. 1-deoxy-D-xylulose 5-phosphate is bound at residue T111. The active-site Proton donor is H202. 3-amino-2-oxopropyl phosphate is bound by residues D203 and 225 to 226 (GH).

It belongs to the PNP synthase family. Homooctamer; tetramer of dimers.

It localises to the cytoplasm. The catalysed reaction is 3-amino-2-oxopropyl phosphate + 1-deoxy-D-xylulose 5-phosphate = pyridoxine 5'-phosphate + phosphate + 2 H2O + H(+). The protein operates within cofactor biosynthesis; pyridoxine 5'-phosphate biosynthesis; pyridoxine 5'-phosphate from D-erythrose 4-phosphate: step 5/5. Its function is as follows. Catalyzes the complicated ring closure reaction between the two acyclic compounds 1-deoxy-D-xylulose-5-phosphate (DXP) and 3-amino-2-oxopropyl phosphate (1-amino-acetone-3-phosphate or AAP) to form pyridoxine 5'-phosphate (PNP) and inorganic phosphate. The sequence is that of Pyridoxine 5'-phosphate synthase from Xanthomonas campestris pv. campestris (strain 8004).